We begin with the raw amino-acid sequence, 55 residues long: Large ribosomal subunit protein bL33 (55 aa).

The protein belongs to the bacterial ribosomal protein bL33 family.

The protein is Large ribosomal subunit protein bL33 of Pectobacterium carotovorum subsp. carotovorum (strain PC1).